Reading from the N-terminus, the 341-residue chain is Eukaryotic translation initiation factor 3 subunit I (341 aa).

WD repeat units follow at residues 8–47 (GHER…RLGT), 56–95 (GHNG…CLYT), 151–190 (LSGS…EVQA), 194–233 (EHSA…VMKV), 235–274 (TTET…GKFE), and 291–331 (GHFG…RSRP).

This sequence belongs to the eIF-3 subunit I family. As to quaternary structure, component of the eukaryotic translation initiation factor 3 (eIF-3) complex.

It localises to the cytoplasm. Its function is as follows. Component of the eukaryotic translation initiation factor 3 (eIF-3) complex, which is involved in protein synthesis of a specialized repertoire of mRNAs and, together with other initiation factors, stimulates binding of mRNA and methionyl-tRNAi to the 40S ribosome. The eIF-3 complex specifically targets and initiates translation of a subset of mRNAs involved in cell proliferation. The polypeptide is Eukaryotic translation initiation factor 3 subunit I (Cryptococcus neoformans var. neoformans serotype D (strain B-3501A) (Filobasidiella neoformans)).